The following is a 534-amino-acid chain: Probable DNA ligase (534 aa).

Glu-213 is a binding site for ATP. Catalysis depends on Lys-215, which acts as the N6-AMP-lysine intermediate. The ATP site is built by Arg-220, Arg-235, Glu-264, Phe-303, Arg-375, and Lys-381.

The protein belongs to the ATP-dependent DNA ligase family. Mg(2+) is required as a cofactor.

It carries out the reaction ATP + (deoxyribonucleotide)n-3'-hydroxyl + 5'-phospho-(deoxyribonucleotide)m = (deoxyribonucleotide)n+m + AMP + diphosphate.. DNA ligase that seals nicks in double-stranded DNA during DNA replication, DNA recombination and DNA repair. This Mycolicibacterium vanbaalenii (strain DSM 7251 / JCM 13017 / BCRC 16820 / KCTC 9966 / NRRL B-24157 / PYR-1) (Mycobacterium vanbaalenii) protein is Probable DNA ligase.